A 497-amino-acid chain; its full sequence is MELVVKSVAAASVKTATLVIPVGENRKLGAVAKAVDQASEGAISAVLKRGDLAGKPGQTLLLQNLAGLKAERVLLVGSGKEEALGDRAWRKLVASVAGVLKGLNGADAVLALDDIAVSNRDAHYGKYRLLAETLLDGEYVFDRFKSQKAEPRALKKVTLLADKAGQAEVERAVKHASAIATGMAFTRDLGNLPPNLCHPSFLAEQAKDLGKAHKGLKVEVLDEKKIKDLGMGAFYAVGQGSDQPPRLIVLNYQGGKKADKPFVLVGKGITFDTGGISLKPGAGMDEMKYDMCGAASVFGTLRAVLELQLPINLVCLLACAENMPSGGATRPGDIVTTMSGQTVEILNTDAEGRLVLCDTLTYAERFKPQAVIDIATLTGACIVALGSHTSGLMGNNDDLVGQLLDAGKRADDRAWQLPLFDEYQEQLDSPFADMGNIGGPKAGTITAGCFLSRFAKAYNWAHMDIAGTAWVSGGKDKGATGRPVPLLTQYLLDRAGA.

The Mn(2+) site is built by Lys267 and Asp272. Residue Lys279 is part of the active site. Residues Asp290, Asp349, and Glu351 each contribute to the Mn(2+) site. The active site involves Arg353.

It belongs to the peptidase M17 family. Requires Mn(2+) as cofactor.

It localises to the cytoplasm. It carries out the reaction Release of an N-terminal amino acid, Xaa-|-Yaa-, in which Xaa is preferably Leu, but may be other amino acids including Pro although not Arg or Lys, and Yaa may be Pro. Amino acid amides and methyl esters are also readily hydrolyzed, but rates on arylamides are exceedingly low.. The catalysed reaction is Release of an N-terminal amino acid, preferentially leucine, but not glutamic or aspartic acids.. Presumably involved in the processing and regular turnover of intracellular proteins. Catalyzes the removal of unsubstituted N-terminal amino acids from various peptides. The chain is Probable cytosol aminopeptidase from Pseudomonas putida (strain GB-1).